A 115-amino-acid polypeptide reads, in one-letter code: NAD(P)H-quinone oxidoreductase subunit M (115 aa).

The protein belongs to the complex I NdhM subunit family. In terms of assembly, NDH-1 can be composed of about 15 different subunits; different subcomplexes with different compositions have been identified which probably have different functions.

It localises to the cellular thylakoid membrane. It catalyses the reaction a plastoquinone + NADH + (n+1) H(+)(in) = a plastoquinol + NAD(+) + n H(+)(out). It carries out the reaction a plastoquinone + NADPH + (n+1) H(+)(in) = a plastoquinol + NADP(+) + n H(+)(out). Functionally, NDH-1 shuttles electrons from an unknown electron donor, via FMN and iron-sulfur (Fe-S) centers, to quinones in the respiratory and/or the photosynthetic chain. The immediate electron acceptor for the enzyme in this species is believed to be plastoquinone. Couples the redox reaction to proton translocation, and thus conserves the redox energy in a proton gradient. Cyanobacterial NDH-1 also plays a role in inorganic carbon-concentration. This chain is NAD(P)H-quinone oxidoreductase subunit M, found in Prochlorococcus marinus subsp. pastoris (strain CCMP1986 / NIES-2087 / MED4).